Here is a 230-residue protein sequence, read N- to C-terminus: Enolase-phosphatase E1 (230 aa).

It belongs to the HAD-like hydrolase superfamily. MasA/MtnC family. Monomer. The cofactor is Mg(2+).

The catalysed reaction is 5-methylsulfanyl-2,3-dioxopentyl phosphate + H2O = 1,2-dihydroxy-5-(methylsulfanyl)pent-1-en-3-one + phosphate. Its pathway is amino-acid biosynthesis; L-methionine biosynthesis via salvage pathway; L-methionine from S-methyl-5-thio-alpha-D-ribose 1-phosphate: step 3/6. It functions in the pathway amino-acid biosynthesis; L-methionine biosynthesis via salvage pathway; L-methionine from S-methyl-5-thio-alpha-D-ribose 1-phosphate: step 4/6. Functionally, bifunctional enzyme that catalyzes the enolization of 2,3-diketo-5-methylthiopentyl-1-phosphate (DK-MTP-1-P) into the intermediate 2-hydroxy-3-keto-5-methylthiopentenyl-1-phosphate (HK-MTPenyl-1-P), which is then dephosphorylated to form the acireductone 1,2-dihydroxy-3-keto-5-methylthiopentene (DHK-MTPene). In Sulfurihydrogenibium sp. (strain YO3AOP1), this protein is Enolase-phosphatase E1.